A 449-amino-acid polypeptide reads, in one-letter code: MGLWDVDKIEYVGRAKGPKEDFAFHYYDADKVVAGKKMKDWLRFGVAWWHTFNQELVDPFGTGTAHRPYYKYTDPMDQALAKVDYAFELFQKLGVEYFCFHDRDIAPEGDTLRETNANLDKVVDKIEENMKSTGVKLLWNTSSLFTNPRFVSGAATSPFADIYAYAGGQLKKSLEIGKRLGAENYVFWGGREGYENLWNTEMKRETDHIAKFFHMCADYAKEIGFEAQFLIEPKPKEPTLHQYDFDAATAIEFLRNHDLTDVFKLNLEGNHANLAGHTYQHEIRVARESGFLGSLDANQGDKLIGWDMDEFPTDLYETVAVMWEVLQAGSIGPHGGLNFDAKPRRTSFYEEDLFRSHIAGMDTYAAGLLVADKMNQDGFIQDLMAERYSSYDSGIGKDIDEGNVTLADLEAYSLDKPQSELIAATKSDHLESVKATINNYIIDALSEVE.

Active-site residues include histidine 101 and aspartate 104. Residues glutamate 232, glutamate 268, histidine 271, aspartate 296, aspartate 307, aspartate 309, and aspartate 340 each contribute to the Mg(2+) site.

This sequence belongs to the xylose isomerase family. In terms of assembly, homotetramer. The cofactor is Mg(2+).

Its subcellular location is the cytoplasm. It catalyses the reaction alpha-D-xylose = alpha-D-xylulofuranose. The chain is Xylose isomerase from Bifidobacterium longum (strain DJO10A).